We begin with the raw amino-acid sequence, 275 residues long: Small ribosomal subunit protein uS2 (275 aa).

The tract at residues 226–275 is disordered; the sequence is AAAPNSASVREEEFSAEAGDEGKGRRAPAKKATEKKADAPAAAPEAPAAE. The segment covering 264-275 has biased composition (low complexity); it reads APAAAPEAPAAE.

It belongs to the universal ribosomal protein uS2 family.

The chain is Small ribosomal subunit protein uS2 from Xanthomonas campestris pv. campestris (strain 8004).